Here is a 2057-residue protein sequence, read N- to C-terminus: Fer-1-like protein 5 (2057 aa).

C2 domains are found at residues 1–99, 152–265, 308–425, 1057–1188, 1213–1346, 1467–1587, and 1705–1853; these read MLRL…VLFV, PGST…TLLR, DDTD…EGVY, DTRP…MRWH, KLGE…AQDY, PKPP…AHCG, and GPPG…KQCS. Ca(2+) contacts are provided by Asp-1502, Asp-1508, Asp-1557, Phe-1558, Asp-1559, Ser-1562, Asp-1565, Asp-1824, Ser-1827, and Asp-1830. Residues 1962 to 1982 traverse the membrane as a helical segment; sequence LIAFMVISIIALMLFNFIYSA.

It belongs to the ferlin family. In terms of assembly, interacts (via second C2 domain) with EHD1 and EHD2. Ca(2+) is required as a cofactor.

Its subcellular location is the cell membrane. The protein localises to the membrane. Its function is as follows. Plays a role in myoblast fusion; probable mediator of endocytic recycling for membrane trafficking events during myotube formation. This Homo sapiens (Human) protein is Fer-1-like protein 5 (FER1L5).